Here is a 151-residue protein sequence, read N- to C-terminus: Ribosome-binding factor A (151 aa).

The disordered stretch occupies residues 116 to 151 (DAEVARAAANARPAGDPDPYREPRPADDDDEDDEDE). Residues 120–129 (ARAAANARPA) are compositionally biased toward low complexity. Positions 142–151 (DDDDEDDEDE) are enriched in acidic residues.

Belongs to the RbfA family. As to quaternary structure, monomer. Binds 30S ribosomal subunits, but not 50S ribosomal subunits or 70S ribosomes.

The protein resides in the cytoplasm. In terms of biological role, one of several proteins that assist in the late maturation steps of the functional core of the 30S ribosomal subunit. Associates with free 30S ribosomal subunits (but not with 30S subunits that are part of 70S ribosomes or polysomes). Required for efficient processing of 16S rRNA. May interact with the 5'-terminal helix region of 16S rRNA. This chain is Ribosome-binding factor A, found in Thermobifida fusca (strain YX).